Here is a 1316-residue protein sequence, read N- to C-terminus: Myosin-5 (1316 aa).

Positions 1-12 (MAIVKRGGRTKT) are enriched in basic residues. Residues 1-29 (MAIVKRGGRTKTKQQQVPAKSSGGGSSGG) are disordered. The Myosin motor domain maps to 43–731 (VGVSDLTLLS…TLFALEDMRD (689 aa)). 136–143 (GESGAGKT) serves as a coordination point for ATP. Ser366 is subject to Phosphoserine. The segment at 414–497 (SIGILDIYGF…PGLFAALNDS (84 aa)) is actin-binding. IQ domains follow at residues 735 to 755 (HNMA…KEDA) and 756 to 781 (AKTI…YGNG). The 193-residue stretch at 789–981 (RRRMSMLGSR…TVSVKQGLPA (193 aa)) folds into the TH1 domain. 2 disordered regions span residues 964–1154 (NGDH…PTLV) and 1209–1316 (DYLK…DDDW). Polar residues-rich tracts occupy residues 971 to 984 (GTVS…ASSK) and 1018 to 1030 (PRYN…ANSG). The span at 1042–1065 (QPQQYQPQQSQQQTPYPTQSSIPS) shows a compositional bias: low complexity. The span at 1097-1106 (SPTQQRQTPA) shows a compositional bias: polar residues. Low complexity predominate over residues 1117–1129 (ASTTIATTTSHTS). Pro residues predominate over residues 1137-1153 (PAPPVKKTAPPPPPPTL). The SH3 domain occupies 1156–1216 (PKFPTYKAMF…PIDYLKECSP (61 aa)). Over residues 1223 to 1232 (APPPPPPPPA) the composition is skewed to pro residues. The segment covering 1233-1268 (ATASAGANGASNPISTTTSTNTTTSSHTTNATSNGS) has biased composition (low complexity). Acidic residues predominate over residues 1305 to 1316 (SDDEEEEDDDDW).

The protein belongs to the TRAFAC class myosin-kinesin ATPase superfamily. Myosin family. Post-translationally, phosphorylation of the TEDS site (Ser-366) is required for the polarization of the actin cytoskeleton. Phosphorylation probably activates the myosin-I ATPase activity.

The protein localises to the cytoplasm. Its subcellular location is the cytoskeleton. The protein resides in the actin patch. Its function is as follows. Type-I myosin implicated in the organization of the actin cytoskeleton. Required for proper actin cytoskeleton polarization and for the internalization step in endocytosis. At the cell cortex, assembles in patch-like structures together with proteins from the actin-polymerizing machinery and promotes actin assembly. Functions as actin nucleation-promoting factor (NPF) for the Arp2/3 complex. Plays a role in chitin deposition in the cell wall, in determination of the budding pattern, and is required for hyphae formation. The chain is Myosin-5 (MYO5) from Candida albicans (strain SC5314 / ATCC MYA-2876) (Yeast).